The following is a 276-amino-acid chain: Large ribosomal subunit protein uL2 (276 aa).

Residues 223 to 276 (GVAMNPVDHPHGGGEGRGKGHHPTSPWGLPTKGYKTRRGKRPSDKFIVRRRNEV) are disordered. Basic and acidic residues-rich tracts occupy residues 230–240 (DHPHGGGEGRG) and 263–276 (RPSDKFIVRRRNEV).

It belongs to the universal ribosomal protein uL2 family. In terms of assembly, part of the 50S ribosomal subunit. Forms a bridge to the 30S subunit in the 70S ribosome.

Functionally, one of the primary rRNA binding proteins. Required for association of the 30S and 50S subunits to form the 70S ribosome, for tRNA binding and peptide bond formation. It has been suggested to have peptidyltransferase activity; this is somewhat controversial. Makes several contacts with the 16S rRNA in the 70S ribosome. This is Large ribosomal subunit protein uL2 from Thermotoga neapolitana (strain ATCC 49049 / DSM 4359 / NBRC 107923 / NS-E).